The following is a 298-amino-acid chain: Tyrosine recombinase XerC (298 aa).

One can recognise a Core-binding (CB) domain in the interval 1 to 84 (MNHIQEAFLN…TLRTFYEYWM (84 aa)). The region spanning 105-286 (YLPQFFYEEE…SNQQLRKVYL (182 aa)) is the Tyr recombinase domain. Residues arginine 145, lysine 169, histidine 238, arginine 241, and histidine 264 contribute to the active site. The O-(3'-phospho-DNA)-tyrosine intermediate role is filled by tyrosine 273.

Belongs to the 'phage' integrase family. XerC subfamily. As to quaternary structure, forms a cyclic heterotetrameric complex composed of two molecules of XerC and two molecules of XerD.

Its subcellular location is the cytoplasm. Functionally, site-specific tyrosine recombinase, which acts by catalyzing the cutting and rejoining of the recombining DNA molecules. The XerC-XerD complex is essential to convert dimers of the bacterial chromosome into monomers to permit their segregation at cell division. It also contributes to the segregational stability of plasmids. The sequence is that of Tyrosine recombinase XerC from Staphylococcus aureus (strain Mu3 / ATCC 700698).